We begin with the raw amino-acid sequence, 87 residues long: MNSLLMITACLAEIGTVWAKEGYLVNKSTGCKYGCFWLGKNENCDKECKAKNQGGSYGYCYSFACWCEGLPDSTPTYPLPNKSCSKK.

Positions 1 to 19 (MNSLLMITACLAEIGTVWA) are cleaved as a signal peptide. One can recognise an LCN-type CS-alpha/beta domain in the interval 20 to 85 (KEGYLVNKST…TYPLPNKSCS (66 aa)). 4 disulfide bridges follow: cysteine 31-cysteine 84, cysteine 35-cysteine 60, cysteine 44-cysteine 65, and cysteine 48-cysteine 67. A propeptide spans 86-87 (KK) (removed by a carboxypeptidase).

This sequence belongs to the long (4 C-C) scorpion toxin superfamily. Sodium channel inhibitor family. Beta subfamily. As to expression, expressed by the venom gland.

The protein resides in the secreted. Beta toxins bind voltage-independently at site-4 of sodium channels (Nav) and shift the voltage of activation toward more negative potentials thereby affecting sodium channel activation and promoting spontaneous and repetitive firing. The protein is Toxin Cll5b of Centruroides limpidus (Mexican scorpion).